The primary structure comprises 673 residues: Protein kinase C delta type (673 aa).

The 106-residue stretch at 1–106 (MAPFLRISFN…KNNGKAEFWL (106 aa)) folds into the C2 domain. A phosphothreonine mark is found at threonine 43 and threonine 50. A Phosphotyrosine modification is found at tyrosine 64. Residue serine 130 is modified to Phosphoserine. A Phosphothreonine modification is found at threonine 141. The residue at position 155 (tyrosine 155) is a Phosphotyrosine. Residues 158–208 (NHEFIATFFGQPTFCSVCKEFVWGLNKQGYKCRQCNAAIHKKCIDKIIGRC) form a Phorbol-ester/DAG-type 1 zinc finger. Threonine 218 is subject to Phosphothreonine. The Phorbol-ester/DAG-type 2 zinc-finger motif lies at 230–280 (PHRFKVYNYMSPTFCDHCGTLLWGLVKQGLKCEDCGMNVHHKCREKVANLC). At serine 299 the chain carries Phosphoserine; by autocatalysis. 2 positions are modified to phosphotyrosine; by SRC: tyrosine 311 and tyrosine 332. One can recognise a Protein kinase domain in the interval 347–601 (FTFQKVLGKG…TGNIRLHPFF (255 aa)). 353-361 (LGKGSFGKV) is an ATP binding site. Tyrosine 372 carries the phosphotyrosine modification. Lysine 376 contributes to the ATP binding site. Threonine 449 carries the post-translational modification Phosphothreonine. The active-site Proton acceptor is the aspartate 471. Residue serine 504 is modified to Phosphoserine. Phosphothreonine; by autocatalysis is present on threonine 505. Tyrosine 565 is modified (phosphotyrosine). Positions 602–673 (KTINWNLLEK…VNPKYEQFLE (72 aa)) constitute an AGC-kinase C-terminal domain. Serine 643, serine 652, and serine 662 each carry phosphoserine.

Belongs to the protein kinase superfamily. AGC Ser/Thr protein kinase family. PKC subfamily. As to quaternary structure, interacts with PDPK1 (via N-terminal region). Interacts with RAD9A. Interacts with CDCP1. Interacts with MUC1. Interacts with VASP. Interacts with CAVIN3. Interacts with PRKD2 (via N-terminus and zing-finger domain 1 and 2) in response to oxidative stress; the interaction is independent of PRKD2 tyrosine phosphorylation. Interacts with PLSC3; interaction is enhanced by UV irradiation. Post-translationally, autophosphorylated and/or phosphorylated at Thr-505, within the activation loop; phosphorylation at Thr-505 is not a prerequisite for enzymatic activity. Autophosphorylated at Ser-299. Upon TNFSF10/TRAIL treatment, phosphorylated at Tyr-155; phosphorylation is required for its translocation to the endoplasmic reticulum and cleavage by caspase-3. Phosphorylated at Tyr-311, Tyr-332 and Tyr-565; phosphorylation of Tyr-311 and Tyr-565 following thrombin or zymosan stimulation potentiates its kinase activity. Phosphorylated by protein kinase PDPK1; phosphorylation is inhibited by the apoptotic C-terminal cleavage product of PKN2. Phosphorylated at Tyr-311 and Tyr-332 by SRC; phosphorylation leads to enhanced autophosphorylation at Thr-505. Phosphorylated at Tyr-311 through a SYK and SRC mechanism downstream of C-type lectin receptors activation, promoting its activation. Proteolytically cleaved into a catalytic subunit and a regulatory subunit by caspase-3 during apoptosis which results in kinase activation.

The protein localises to the cytoplasm. It localises to the nucleus. Its subcellular location is the perinuclear region. It is found in the cell membrane. The protein resides in the mitochondrion. The protein localises to the endomembrane system. It carries out the reaction L-seryl-[protein] + ATP = O-phospho-L-seryl-[protein] + ADP + H(+). The enzyme catalyses L-threonyl-[protein] + ATP = O-phospho-L-threonyl-[protein] + ADP + H(+). It catalyses the reaction L-tyrosyl-[protein] + ATP = O-phospho-L-tyrosyl-[protein] + ADP + H(+). Novel PKCs (PRKCD, PRKCE, PRKCH and PRKCQ) are calcium-insensitive, but activated by diacylglycerol (DAG) and phosphatidylserine. Three specific sites; Thr-505 (activation loop of the kinase domain), Ser-643 (turn motif) and Ser-662 (hydrophobic region), need to be phosphorylated for its full activation. Activated by caspase-3 (CASP3) cleavage during apoptosis. After cleavage, the pseudosubstrate motif in the regulatory subunit is released from the substrate recognition site of the catalytic subunit, which enables PRKCD to become constitutively activated. The catalytic subunit which displays properties of a sphingosine-dependent protein kinase is activated by D-erythro-sphingosine (Sph) or N,N-dimethyl-D-erythrosphingosine (DMS) or N,N,N-trimethyl-D-erythrosphingosine (TMS), but not by ceramide or Sph-1-P and is strongly inhibited by phosphatidylserine. In terms of biological role, calcium-independent, phospholipid- and diacylglycerol (DAG)-dependent serine/threonine-protein kinase that plays contrasting roles in cell death and cell survival by functioning as a pro-apoptotic protein during DNA damage-induced apoptosis, but acting as an anti-apoptotic protein during cytokine receptor-initiated cell death, is involved in tumor suppression, is required for oxygen radical production by NADPH oxidase and acts as a positive or negative regulator in platelet functional responses. Upon DNA damage, activates the promoter of the death-promoting transcription factor BCLAF1/Btf to trigger BCLAF1-mediated p53/TP53 gene transcription and apoptosis. In response to oxidative stress, interact with and activate CHUK/IKKA in the nucleus, causing the phosphorylation of p53/TP53. In the case of ER stress or DNA damage-induced apoptosis, can form a complex with the tyrosine-protein kinase ABL1 which trigger apoptosis independently of p53/TP53. In cytosol can trigger apoptosis by activating MAPK11 or MAPK14, inhibiting AKT1 and decreasing the level of X-linked inhibitor of apoptosis protein (XIAP), whereas in nucleus induces apoptosis via the activation of MAPK8 or MAPK9. Upon ionizing radiation treatment, is required for the activation of the apoptosis regulators BAX and BAK, which trigger the mitochondrial cell death pathway. Can phosphorylate MCL1 and target it for degradation which is sufficient to trigger for BAX activation and apoptosis. Is required for the control of cell cycle progression both at G1/S and G2/M phases. Mediates phorbol 12-myristate 13-acetate (PMA)-induced inhibition of cell cycle progression at G1/S phase by up-regulating the CDK inhibitor CDKN1A/p21 and inhibiting the cyclin CCNA2 promoter activity. In response to UV irradiation can phosphorylate CDK1, which is important for the G2/M DNA damage checkpoint activation. Can protect glioma cells from the apoptosis induced by TNFSF10/TRAIL, probably by inducing increased phosphorylation and subsequent activation of AKT1. Can also act as tumor suppressor upon mitogenic stimulation with PMA or TPA. In N-formyl-methionyl-leucyl-phenylalanine (fMLP)-treated cells, is required for NCF1 (p47-phox) phosphorylation and activation of NADPH oxidase activity, and regulates TNF-elicited superoxide anion production in neutrophils, by direct phosphorylation and activation of NCF1 or indirectly through MAPK1/3 (ERK1/2) signaling pathways. Involved in antifungal immunity by mediating phosphorylation and activation of CARD9 downstream of C-type lectin receptors activation, promoting interaction between CARD9 and BCL10, followed by activation of NF-kappa-B and MAP kinase p38 pathways. May also play a role in the regulation of NADPH oxidase activity in eosinophil after stimulation with IL5, leukotriene B4 or PMA. In collagen-induced platelet aggregation, acts a negative regulator of filopodia formation and actin polymerization by interacting with and negatively regulating VASP phosphorylation. Downstream of PAR1, PAR4 and CD36/GP4 receptors, regulates differentially platelet dense granule secretion; acts as a positive regulator in PAR-mediated granule secretion, whereas it negatively regulates CD36/GP4-mediated granule release. Phosphorylates MUC1 in the C-terminal and regulates the interaction between MUC1 and beta-catenin. The catalytic subunit phosphorylates 14-3-3 proteins (YWHAB, YWHAZ and YWHAH) in a sphingosine-dependent fashion. Phosphorylates ELAVL1 in response to angiotensin-2 treatment. Phosphorylates mitochondrial phospholipid scramblase 3 (PLSCR3), resulting in increased cardiolipin expression on the mitochondrial outer membrane which facilitates apoptosis. Phosphorylates SMPD1 which induces SMPD1 secretion. Its function is as follows. Truncated isoform 2 is inactive. In Rattus norvegicus (Rat), this protein is Protein kinase C delta type.